The chain runs to 544 residues: Chaperonin GroEL (544 aa).

ATP contacts are provided by residues 29–32, 86–90, G413, 476–478, and D492; these read TLGP, DGTTT, and NAA.

This sequence belongs to the chaperonin (HSP60) family. As to quaternary structure, forms a cylinder of 14 subunits composed of two heptameric rings stacked back-to-back. Interacts with the co-chaperonin GroES.

It is found in the cytoplasm. It localises to the secreted. The enzyme catalyses ATP + H2O + a folded polypeptide = ADP + phosphate + an unfolded polypeptide.. In terms of biological role, together with its co-chaperonin GroES, plays an essential role in assisting protein folding. The GroEL-GroES system forms a nano-cage that allows encapsulation of the non-native substrate proteins and provides a physical environment optimized to promote and accelerate protein folding. This chain is Chaperonin GroEL, found in Bacillus subtilis (strain 168).